The chain runs to 158 residues: Phosphopantetheine adenylyltransferase (158 aa).

Thr9 provides a ligand contact to substrate. ATP-binding positions include 9–10 (TF) and His17. Lys41, Leu73, and Arg87 together coordinate substrate. Residues 88–90 (GLR), Glu98, and 123–129 (YAYISSS) each bind ATP.

This sequence belongs to the bacterial CoaD family. In terms of assembly, homohexamer. It depends on Mg(2+) as a cofactor.

It is found in the cytoplasm. The enzyme catalyses (R)-4'-phosphopantetheine + ATP + H(+) = 3'-dephospho-CoA + diphosphate. Its pathway is cofactor biosynthesis; coenzyme A biosynthesis; CoA from (R)-pantothenate: step 4/5. Reversibly transfers an adenylyl group from ATP to 4'-phosphopantetheine, yielding dephospho-CoA (dPCoA) and pyrophosphate. In Allochromatium vinosum (strain ATCC 17899 / DSM 180 / NBRC 103801 / NCIMB 10441 / D) (Chromatium vinosum), this protein is Phosphopantetheine adenylyltransferase.